We begin with the raw amino-acid sequence, 451 residues long: Tubulin beta chain (451 aa).

GTP contacts are provided by Gln11, Glu69, Ser138, Gly142, Thr143, Gly144, Asn204, and Asn226. Residue Glu69 participates in Mg(2+) binding. Residues 426–451 (QDATAEEEGEFDENEGAEGEEQPADY) form a disordered region. The span at 429 to 451 (TAEEEGEFDENEGAEGEEQPADY) shows a compositional bias: acidic residues.

Belongs to the tubulin family. Dimer of alpha and beta chains. A typical microtubule is a hollow water-filled tube with an outer diameter of 25 nm and an inner diameter of 15 nM. Alpha-beta heterodimers associate head-to-tail to form protofilaments running lengthwise along the microtubule wall with the beta-tubulin subunit facing the microtubule plus end conferring a structural polarity. Microtubules usually have 13 protofilaments but different protofilament numbers can be found in some organisms and specialized cells. Mg(2+) serves as cofactor.

Its subcellular location is the cytoplasm. It is found in the cytoskeleton. In terms of biological role, tubulin is the major constituent of microtubules, a cylinder consisting of laterally associated linear protofilaments composed of alpha- and beta-tubulin heterodimers. Microtubules grow by the addition of GTP-tubulin dimers to the microtubule end, where a stabilizing cap forms. Below the cap, tubulin dimers are in GDP-bound state, owing to GTPase activity of alpha-tubulin. The sequence is that of Tubulin beta chain from Naegleria pringsheimi (Amoeba).